The primary structure comprises 505 residues: Maturase K (505 aa).

Belongs to the intron maturase 2 family. MatK subfamily.

Its subcellular location is the plastid. It is found in the chloroplast. Its function is as follows. Usually encoded in the trnK tRNA gene intron. Probably assists in splicing its own and other chloroplast group II introns. This is Maturase K from Gomphrena haageana (Haage's globe-amaranth).